Here is an 828-residue protein sequence, read N- to C-terminus: Periplasmic nitrate reductase (828 aa).

Positions 1-31 (MKLSRRSFMKANAVAAAAAAAGLSVPGVARA) form a signal peptide, tat-type signal. In terms of domain architecture, 4Fe-4S Mo/W bis-MGD-type spans 39-95 (IKWDKAPCRFCGTGCGVLVGTQQGRVVACQGDPDAPVNRGLNCIKGYFLPKIMYGKD). The [4Fe-4S] cluster site is built by C46, C49, C53, and C81. Mo-bis(molybdopterin guanine dinucleotide) is bound by residues K83, Q150, N175, C179, 212–219 (WGSNMAEM), 243–247 (STYQH), 262–264 (QSD), M372, Q376, N482, 508–509 (SD), K531, D558, and 718–727 (TGRVLEHWHT). F794 serves as a coordination point for substrate. The Mo-bis(molybdopterin guanine dinucleotide) site is built by N802 and K819.

It belongs to the prokaryotic molybdopterin-containing oxidoreductase family. NasA/NapA/NarB subfamily. As to quaternary structure, component of the periplasmic nitrate reductase NapAB complex composed of NapA and NapB. It depends on [4Fe-4S] cluster as a cofactor. Mo-bis(molybdopterin guanine dinucleotide) is required as a cofactor. In terms of processing, predicted to be exported by the Tat system. The position of the signal peptide cleavage has not been experimentally proven.

It is found in the periplasm. The catalysed reaction is 2 Fe(II)-[cytochrome] + nitrate + 2 H(+) = 2 Fe(III)-[cytochrome] + nitrite + H2O. In terms of biological role, catalytic subunit of the periplasmic nitrate reductase complex NapAB. Receives electrons from NapB and catalyzes the reduction of nitrate to nitrite. The polypeptide is Periplasmic nitrate reductase (Escherichia coli O1:K1 / APEC).